We begin with the raw amino-acid sequence, 239 residues long: Aspartate/glutamate leucyltransferase (239 aa).

The protein belongs to the R-transferase family. Bpt subfamily.

It localises to the cytoplasm. It carries out the reaction N-terminal L-glutamyl-[protein] + L-leucyl-tRNA(Leu) = N-terminal L-leucyl-L-glutamyl-[protein] + tRNA(Leu) + H(+). The enzyme catalyses N-terminal L-aspartyl-[protein] + L-leucyl-tRNA(Leu) = N-terminal L-leucyl-L-aspartyl-[protein] + tRNA(Leu) + H(+). Its function is as follows. Functions in the N-end rule pathway of protein degradation where it conjugates Leu from its aminoacyl-tRNA to the N-termini of proteins containing an N-terminal aspartate or glutamate. The polypeptide is Aspartate/glutamate leucyltransferase (Campylobacter jejuni subsp. jejuni serotype O:6 (strain 81116 / NCTC 11828)).